The following is a 494-amino-acid chain: NAD(P)H-quinone oxidoreductase subunit 2 B, chloroplastic (494 aa).

14 helical membrane-spanning segments follow: residues 13 to 33 (SILP…IDLI), 39 to 59 (TPWL…ILLF), 81 to 101 (IFRL…IDYI), 107 to 127 (ALTE…FLCC), 131 to 151 (LVTI…LSGY), 166 to 186 (LLMG…LYGL), 211 to 231 (MFIS…LVPF), 243 to 263 (PTPV…ALAT), 277 to 297 (WHLL…FIAV), 305 to 325 (MLAY…IAAE), 336 to 356 (YMLI…LFGL), 378 to 398 (LSLV…GFFG), 411 to 433 (LYFL…LKII), and 468 to 488 (MIIC…IIAI).

The protein belongs to the complex I subunit 2 family. In terms of assembly, NDH is composed of at least 16 different subunits, 5 of which are encoded in the nucleus.

It localises to the plastid. The protein localises to the chloroplast thylakoid membrane. The enzyme catalyses a plastoquinone + NADH + (n+1) H(+)(in) = a plastoquinol + NAD(+) + n H(+)(out). It carries out the reaction a plastoquinone + NADPH + (n+1) H(+)(in) = a plastoquinol + NADP(+) + n H(+)(out). Its function is as follows. NDH shuttles electrons from NAD(P)H:plastoquinone, via FMN and iron-sulfur (Fe-S) centers, to quinones in the photosynthetic chain and possibly in a chloroplast respiratory chain. The immediate electron acceptor for the enzyme in this species is believed to be plastoquinone. Couples the redox reaction to proton translocation, and thus conserves the redox energy in a proton gradient. The protein is NAD(P)H-quinone oxidoreductase subunit 2 B, chloroplastic of Angiopteris evecta (Mule's foot fern).